The sequence spans 1579 residues: Eukaryotic translation initiation factor 4 gamma 3 (1579 aa).

Disordered stretches follow at residues 1-35 (MNSQPQARSPFFQRPQIQPPRAAIPNSSPSIRPGV) and 128-326 (TQQQ…GPSL). A compositionally biased stretch (low complexity) spans 10-25 (PFFQRPQIQPPRAAIP). Polar residues predominate over residues 26-35 (NSSPSIRPGV). The tract at residues 134–162 (PAKREKKTIRIRDPNQGGKDITEEIMSGG) is PABPC1-binding. The segment covering 167-183 (PTPPIGRPASTPTPPQQ) has biased composition (pro residues). Thr-168 carries the phosphothreonine modification. Phosphoserine occurs at positions 230, 232, and 267. Low complexity predominate over residues 266 to 292 (SSPTSLPPLARSSLPSPMSAALSSQPL). Residues 295 to 308 (AEDKCELPSSKEED) show a composition bias toward basic and acidic residues. Polar residues predominate over residues 315–326 (PTSCTAASGPSL). Ser-436, Ser-470, Ser-472, and Ser-490 each carry phosphoserine. The segment covering 454–470 (RTCLSKDAKEMQDKAES) has biased composition (basic and acidic residues). Disordered stretches follow at residues 454–615 (RTCL…DTEG), 681–706 (RQTPGGRGVPLLNVGPRRSQPGQRRE), and 724–744 (AENAWKPSQKRDSHADDPESI). Acidic residues predominate over residues 471-480 (ESDGQAEETA). Over residues 481–501 (DPQSLHSGRSPAPVQTATTAP) the composition is skewed to polar residues. Basic and acidic residues-rich tracts occupy residues 506–515 (KTKEQTRTPD) and 549–563 (SERDPSALKRGKAEE). Residues 589 to 598 (SGSADSSADG) are compositionally biased toward low complexity. Residues 606–615 (ESWKPADTEG) show a composition bias toward basic and acidic residues. An EIF4E-binding region spans residues 614–625 (EGKKQYDREFLL). An eIF3/EIF4A-binding region spans residues 694 to 1014 (VGPRRSQPGQ…EQRKVQQLMT (321 aa)). HEAT repeat units follow at residues 740 to 778 (DPESIKTQELFRKVRSILNKLTPQMFNQLMKQVSALTVD), 779 to 826 (TEER…GNTV), 827 to 900 (NFRK…LKML), 901 to 939 (TEAIMHDCVVKLLKNHDEESLECLCRLLTTIGKDLDFEK), and 940 to 979 (AKPRMDQYFNQMEKIVKERKTSSRIRFMLQDVIDLRLCNW). One can recognise an MIF4G domain in the interval 750–978 (FRKVRSILNK…QDVIDLRLCN (229 aa)). The span at 855–871 (KELEAASAPEERTRLHD) shows a compositional bias: basic and acidic residues. A disordered region spans residues 855-875 (KELEAASAPEERTRLHDELEE). A coiled-coil region spans residues 989–1018 (KTIEQIHKEAKIEEQEEQRKVQQLMTKEKR). 2 disordered regions span residues 1009–1037 (VQQLMTKEKRRPGVQRVDEGGWNTVQGAK) and 1067–1214 (LGSW…LSEE). A compositionally biased stretch (low complexity) spans 1086-1098 (LRSSASSLNRFSP). Ser-1150 bears the Phosphoserine; by CaMK1 mark. Composition is skewed to basic and acidic residues over residues 1150–1169 (SSKDLLDNQSQEEQRREMLE) and 1179–1197 (DAERASTEADRSKTRELAK). Residues 1154–1176 (LLDNQSQEEQRREMLETVKQLTG) adopt a coiled-coil conformation. Phosphoserine is present on Ser-1212. The MI domain maps to 1215–1337 (EVERKSKSII…SMRELIVEFS (123 aa)). Residues 1406–1438 (SSEALSKKELSAEELSQRLEKLIMEEKADDERI) adopt a coiled-coil conformation. The W2 domain occupies 1410 to 1579 (LSKKELSAEE…REAEEESEDN (170 aa)). The interval 1427 to 1579 (LIMEEKADDE…REAEEESEDN (153 aa)) is EIF4A-binding. The interval 1565–1579 (FFTWLREAEEESEDN) is necessary but not sufficient for MKNK1-binding.

It belongs to the eukaryotic initiation factor 4G family. As to quaternary structure, interacts with EIF4A, EIF4E, eIF3 and PABPC1. Part of a complex with EIF4E. eIF4F is a multi-subunit complex, the composition of which varies with external and internal environmental conditions. It is composed of at least EIF4A, EIF4E and EIF4G1/EIF4G3. EIF4G1/EIF4G3 interacts through its C-terminus with the serine/threonine kinases MKNK1, and with MKNK2. Appears to act as a scaffold protein, holding these enzymes in place to phosphorylate eIF4E. Non-phosphorylated EIF4EBP1 competes with EIF4G1/EIFG3 to interact with EIF4E; insulin stimulated MAP-kinase (MAPK1 and MAPK3) phosphorylation of EIF4EBP1 causes dissociation of the complex allowing EIF4G1/EIF4G3 to bind and consequent initiation of translation. EIF4G1/EIF4G3 interacts with PABPC1 to bring about circularization of the mRNA. Interacts with FXR1; promoting translation of FXR1 target mRNAs.

Functionally, component of the protein complex eIF4F, which is involved in the recognition of the mRNA cap, ATP-dependent unwinding of 5'-terminal secondary structure and recruitment of mRNA to the ribosome. Functional homolog of EIF4G1. The polypeptide is Eukaryotic translation initiation factor 4 gamma 3 (Eif4g3) (Mus musculus (Mouse)).